We begin with the raw amino-acid sequence, 159 residues long: Sumo-conjugating enzyme ubc9 (159 aa).

Residues 4-157 (ISSARLSEER…VKAQSKVYPP (154 aa)) enclose the UBC core domain. Cysteine 93 acts as the Glycyl thioester intermediate in catalysis.

It belongs to the ubiquitin-conjugating enzyme family.

The protein localises to the nucleus. It participates in protein modification; protein sumoylation. In terms of biological role, accepts the ubiquitin-like protein sumo from the E1 complex and catalyzes its covalent attachment to other proteins with the help of an E3 ligase. This is Sumo-conjugating enzyme ubc9 (ubc9) from Dictyostelium discoideum (Social amoeba).